A 116-amino-acid polypeptide reads, in one-letter code: Tyrosine-protein phosphatase 10 (116 aa).

Residues 1-116 (WRMVWEQNVS…SPTGYGPIVV (116 aa)) enclose the Tyrosine-protein phosphatase domain. Asp86 contributes to the substrate binding site.

This sequence belongs to the protein-tyrosine phosphatase family.

It carries out the reaction O-phospho-L-tyrosyl-[protein] + H2O = L-tyrosyl-[protein] + phosphate. This Styela plicata (Wrinkled sea squirt) protein is Tyrosine-protein phosphatase 10 (STY-10).